Reading from the N-terminus, the 81-residue chain is ATP synthase subunit c, chloroplastic (81 aa).

The next 2 helical transmembrane spans lie at 7-27 (AASV…PGIG) and 57-77 (LAFM…LLFA).

Belongs to the ATPase C chain family. F-type ATPases have 2 components, F(1) - the catalytic core - and F(0) - the membrane proton channel. F(1) has five subunits: alpha(3), beta(3), gamma(1), delta(1), epsilon(1). F(0) has four main subunits: a(1), b(1), b'(1) and c(10-14). The alpha and beta chains form an alternating ring which encloses part of the gamma chain. F(1) is attached to F(0) by a central stalk formed by the gamma and epsilon chains, while a peripheral stalk is formed by the delta, b and b' chains.

It is found in the plastid. The protein resides in the chloroplast thylakoid membrane. In terms of biological role, f(1)F(0) ATP synthase produces ATP from ADP in the presence of a proton or sodium gradient. F-type ATPases consist of two structural domains, F(1) containing the extramembraneous catalytic core and F(0) containing the membrane proton channel, linked together by a central stalk and a peripheral stalk. During catalysis, ATP synthesis in the catalytic domain of F(1) is coupled via a rotary mechanism of the central stalk subunits to proton translocation. Key component of the F(0) channel; it plays a direct role in translocation across the membrane. A homomeric c-ring of between 10-14 subunits forms the central stalk rotor element with the F(1) delta and epsilon subunits. The sequence is that of ATP synthase subunit c, chloroplastic from Staurastrum punctulatum (Green alga).